A 943-amino-acid polypeptide reads, in one-letter code: Multimerin-2 (943 aa).

An N-terminal signal peptide occupies residues 1–22 (MIPTLLLGFGVYLSWGLLGSWA). Positions 54–132 (RRNWCPYQKS…PGFQGPDCQD (79 aa)) constitute an EMI domain. 3 cysteine pairs are disulfide-bonded: Cys-58–Cys-122, Cys-85–Cys-92, and Cys-121–Cys-130. An O-linked (Fuc...) serine glycan is attached at Ser-63. A glycan (O-linked (Fuc) threonine) is linked at Thr-67. A disordered region spans residues 128-150 (PDCQDHNPTANPEPTEPSGKLQE). N-linked (GlcNAc...) asparagine glycosylation is found at Asn-205, Asn-214, Asn-249, Asn-261, Asn-350, Asn-379, Asn-439, and Asn-472. Coiled-coil stretches lie at residues 391–480 (EEEL…HLHA) and 551–580 (RGEG…ALKT). The N-linked (GlcNAc...) asparagine glycan is linked to Asn-583. Residues 688 to 720 (DSGREEEAMTLAELEQEIRRLSSDVKQIGQCCE) adopt a coiled-coil conformation. 2 N-linked (GlcNAc...) asparagine glycosylation sites follow: Asn-728 and Asn-766. Residues 778 to 801 (LSKKDKKQPRGPGESRKRDKKQVV) form a disordered region. Residues 815-943 (ETGSPVAFYA…AFGGFLMFKT (129 aa)) enclose the C1q domain. Asn-839 carries an N-linked (GlcNAc...) asparagine glycan.

As to quaternary structure, heteromer of p110, p125, p140 and p200 subunits; disulfide-linked. Interacts with VEGFA. Interacts with CD93; this interaction promotes angiogenesis. Interacts with CD248. N- and O-glycosylated. Post-translationally, processed by matrix metalloproteinases (MMPs) including MMP9 and, to a lesser degree, by MMP2 upon angiogenic stimulation. In terms of processing, O-fucosylated within the EMI domain (at Ser-63 and Thr-67) by FUT10/POFUT3 and FUT11/POFUT4.

The protein resides in the secreted. Its subcellular location is the extracellular space. It is found in the extracellular matrix. Extracellular matrix protein that plays significant roles in the vascular system and is required for the maintenance and stability of blood vessel. Affects several essential steps in angiogenesis including endothelial cell proliferation, migration, and tube formation. Positively regulates angiogenesis by acting as a ligand for CD93 receptor. In Mus musculus (Mouse), this protein is Multimerin-2.